We begin with the raw amino-acid sequence, 143 residues long: Large ribosomal subunit protein uL13 (143 aa).

It belongs to the universal ribosomal protein uL13 family. In terms of assembly, part of the 50S ribosomal subunit.

Its function is as follows. This protein is one of the early assembly proteins of the 50S ribosomal subunit, although it is not seen to bind rRNA by itself. It is important during the early stages of 50S assembly. The sequence is that of Large ribosomal subunit protein uL13 from Chloroflexus aggregans (strain MD-66 / DSM 9485).